Reading from the N-terminus, the 84-residue chain is Cell division topological specificity factor (84 aa).

Belongs to the MinE family.

In terms of biological role, prevents the cell division inhibition by proteins MinC and MinD at internal division sites while permitting inhibition at polar sites. This ensures cell division at the proper site by restricting the formation of a division septum at the midpoint of the long axis of the cell. This is Cell division topological specificity factor from Desulfotalea psychrophila (strain LSv54 / DSM 12343).